Reading from the N-terminus, the 388-residue chain is tRNA-specific adenosine deaminase 1 (388 aa).

An A to I editase domain is found at 63–388 (CLATGVKCTP…PNGGNEFQWI (326 aa)). Histidine 89 is a binding site for Zn(2+). Glutamate 91 serves as the catalytic Proton donor. Arginine 96 serves as a coordination point for 1D-myo-inositol hexakisphosphate. Cysteine 144 and cysteine 201 together coordinate Zn(2+). Lysine 204, lysine 357, and arginine 363 together coordinate 1D-myo-inositol hexakisphosphate.

This sequence belongs to the ADAT1 family. It depends on 1D-myo-inositol hexakisphosphate as a cofactor. Zn(2+) serves as cofactor.

It is found in the cytoplasm. It localises to the nucleus. It catalyses the reaction adenosine(37) in tRNA(Ala) + H2O + H(+) = inosine(37) in tRNA(Ala) + NH4(+). In terms of biological role, deaminates adenosine-37 to inosine in tRNA-Ala. The protein is tRNA-specific adenosine deaminase 1 of Schizosaccharomyces pombe (strain 972 / ATCC 24843) (Fission yeast).